Here is a 66-residue protein sequence, read N- to C-terminus: Large ribosomal subunit protein bL35 (66 aa).

It belongs to the bacterial ribosomal protein bL35 family.

The sequence is that of Large ribosomal subunit protein bL35 from Brucella anthropi (strain ATCC 49188 / DSM 6882 / CCUG 24695 / JCM 21032 / LMG 3331 / NBRC 15819 / NCTC 12168 / Alc 37) (Ochrobactrum anthropi).